The following is a 290-amino-acid chain: Ribonuclease 3 (290 aa).

One can recognise an RNase III domain in the interval Tyr-20–Gly-145. Residue Glu-62 coordinates Mg(2+). The active site involves Asp-66. Mg(2+) is bound by residues Asn-131 and Glu-134. Residue Glu-134 is part of the active site. Positions Asn-173–Gly-242 constitute a DRBM domain. A disordered region spans residues Lys-254–Val-290. A compositionally biased stretch (polar residues) spans Glu-267–Ile-279.

It belongs to the ribonuclease III family. Homodimer. Mg(2+) serves as cofactor.

It is found in the cytoplasm. It carries out the reaction Endonucleolytic cleavage to 5'-phosphomonoester.. Functionally, digests double-stranded RNA. Involved in the processing of primary rRNA transcript to yield the immediate precursors to the large and small rRNAs (23S and 16S). Processes some mRNAs, and tRNAs when they are encoded in the rRNA operon. Processes pre-crRNA and tracrRNA of type II CRISPR loci if present in the organism. This chain is Ribonuclease 3, found in Bacteroides fragilis (strain YCH46).